The chain runs to 373 residues: Flagellar P-ring protein (373 aa).

An N-terminal signal peptide occupies residues 1 to 26 (MKLFFRFVTLVAVLAMSLANVAPAWA).

Belongs to the FlgI family. As to quaternary structure, the basal body constitutes a major portion of the flagellar organelle and consists of four rings (L,P,S, and M) mounted on a central rod.

It is found in the periplasm. It localises to the bacterial flagellum basal body. Its function is as follows. Assembles around the rod to form the L-ring and probably protects the motor/basal body from shearing forces during rotation. The chain is Flagellar P-ring protein from Rhizobium johnstonii (strain DSM 114642 / LMG 32736 / 3841) (Rhizobium leguminosarum bv. viciae).